Consider the following 751-residue polypeptide: MAFRAICVLVGVFICSICVRGSSQPQARVYLTFDELRETKTSEYFSLSHQQLDYRILLMDEDQDRIYVGSKDHILSLNINNISQEPLSVFWPASTIKVEECKMAGKDPTHGCGNFVRVIQTFNRTHLYVCGSGAFSPVCTYLNRGRRSEDQVFMIDSKCESGKGRCSFNPNVNTVSVMINEELFSGMYIDFMGTDAAIFRSLTKRNAVRTDQHNSKWLSEPMFVDAHVIPDGTDPNDAKVYFFFKERLTDNNRSTKQIHSMIARICPNDTGGQRSLVNKWTTFLKARLVCSVTDEDGPETHFDELEDVFLLETDNPRTTLVYGIFTTSSSVFKGSAVCVYHLSDIQTVFNGPFAHKEGPNHQLISYQGRIPYPRPGTCPGGAFTPNMRTTKDFPDDVVTFIRNHPLMYNSIYPIHRRPLIVRIGTDYKYTKIAVDRVNAADGRYHVLFLGTDRGTVQKVVVLPTNSSASGELILEELEVFKNHVPITTMKISSKKQQLYVSSNEGVSQVSLHRCHIYGTACADCCLARDPYCAWDGHSCSRFYPTGKRRSRRQDVRHGNPLTQCRGFNLKAYRNAAEIVQYGVRNNSTFLECAPKSPQASIKWLLQKDKDRRKEVKLNERIIATSQGLLIRSVQDSDQGLYHCIATENSFKQTIAKINFKVLDSEMVAVVTDKWSPWTWAGSVRALPFHPKDILGAFSHSEMQLINQYCKDTRQQQQLGEEPQKMRGDYGKLKALINSRKSRNRRNQLPES.

Positions 1–20 are cleaved as a signal peptide; it reads MAFRAICVLVGVFICSICVR. One can recognise a Sema domain in the interval 28–511; it reads RVYLTFDELR…SNEGVSQVSL (484 aa). Asparagine 81 carries an N-linked (GlcNAc...) asparagine glycan. An intrachain disulfide couples cysteine 101 to cysteine 112. The N-linked (GlcNAc...) asparagine glycan is linked to asparagine 123. A disulfide bridge connects residues cysteine 130 and cysteine 139. N-linked (GlcNAc...) asparagine glycans are attached at residues asparagine 252 and asparagine 268. 2 cysteine pairs are disulfide-bonded: cysteine 266–cysteine 378 and cysteine 290–cysteine 338. Asparagine 465 carries an N-linked (GlcNAc...) asparagine glycan. Cysteine 514 and cysteine 532 are oxidised to a cystine. An Ig-like C2-type domain is found at 571-655; it reads AYRNAAEIVQ…TENSFKQTIA (85 aa). N-linked (GlcNAc...) asparagine glycans are attached at residues asparagine 585 and asparagine 586. An intrachain disulfide couples cysteine 643 to cysteine 709.

The protein belongs to the semaphorin family. Interacts with PLXND1.

The protein resides in the secreted. Binds to plexin family members and plays an important role in the regulation of developmental processes. Required for normal cardiovascular development during embryogenesis. Functions as attractant for growing axons, and thereby plays an important role in axon growth and axon guidance. This Mus musculus (Mouse) protein is Semaphorin-3C (Sema3c).